Here is a 102-residue protein sequence, read N- to C-terminus: NADH-quinone oxidoreductase subunit K (102 aa).

A run of 3 helical transmembrane segments spans residues 6 to 26 (LEHGLAVAGILFCLGLVGLMV), 30 to 50 (ILFVLMSLEIMMNAAALAFIV), and 62 to 82 (VMFILVISLAAAEASIGLAIL).

It belongs to the complex I subunit 4L family. As to quaternary structure, NDH-1 is composed of 13 different subunits. Subunits NuoA, H, J, K, L, M, N constitute the membrane sector of the complex.

The protein resides in the cell inner membrane. The enzyme catalyses a quinone + NADH + 5 H(+)(in) = a quinol + NAD(+) + 4 H(+)(out). In terms of biological role, NDH-1 shuttles electrons from NADH, via FMN and iron-sulfur (Fe-S) centers, to quinones in the respiratory chain. The immediate electron acceptor for the enzyme in this species is believed to be ubiquinone. Couples the redox reaction to proton translocation (for every two electrons transferred, four hydrogen ions are translocated across the cytoplasmic membrane), and thus conserves the redox energy in a proton gradient. This chain is NADH-quinone oxidoreductase subunit K, found in Pseudomonas fluorescens (strain SBW25).